The primary structure comprises 345 residues: Flotillin-like protein FloA 1 (345 aa).

Residues 26–46 (LLLLVGVFLALFFAAVLGFFF) form a helical membrane-spanning segment.

This sequence belongs to the flotillin-like FloA family. As to quaternary structure, homooligomerizes.

It is found in the cell membrane. The protein localises to the membrane raft. In terms of biological role, found in functional membrane microdomains (FMM) that may be equivalent to eukaryotic membrane rafts. FMMs are highly dynamic and increase in number as cells age. Flotillins are thought to be important factors in membrane fluidity. The chain is Flotillin-like protein FloA 1 from Rhodopirellula baltica (strain DSM 10527 / NCIMB 13988 / SH1).